The sequence spans 665 residues: Kinesin-like protein KIF22 (665 aa).

The Kinesin motor domain occupies 43 to 368 (RVRVAVRLRP…LNFAARSKEV (326 aa)). An ATP-binding site is contributed by 127–134 (GPTGAGKT). The disordered stretch occupies residues 379–428 (QPHALGPVKLSQKELLGPPEAKRARGPEEEEIGSPEPMAAPASASQKLSP). Residues S412, S427, and S452 each carry the phosphoserine modification. The span at 412–428 (SPEPMAAPASASQKLSP) shows a compositional bias: low complexity. K465 is covalently cross-linked (Glycyl lysine isopeptide (Lys-Gly) (interchain with G-Cter in SUMO2)). A coiled-coil region spans residues 465-508 (KRERMVLMKTVEEKDLEIERLKTKQKELEAKMLAQKAEEKENHC). Residues S543, S562, and S581 each carry the phosphoserine modification.

It belongs to the TRAFAC class myosin-kinesin ATPase superfamily. Kinesin family. As to quaternary structure, interacts with FAM83D. Interacts with SIAH1. Post-translationally, ubiquitinated; mediated by SIAH1 and leading to its subsequent proteasomal degradation. In terms of tissue distribution, expressed in bone, cartilage, joint capsule, ligament, skin, and primary cultured chondrocytes.

The protein resides in the nucleus. It is found in the cytoplasm. It localises to the cytoskeleton. In terms of biological role, kinesin family member that is involved in spindle formation and the movements of chromosomes during mitosis and meiosis. Binds to microtubules and to DNA. Plays a role in congression of laterally attached chromosomes in NDC80-depleted cells. The chain is Kinesin-like protein KIF22 (KIF22) from Homo sapiens (Human).